Consider the following 266-residue polypeptide: GTP cyclohydrolase III (266 aa).

The protein belongs to the archaeal-type GTP cyclohydrolase family.

The catalysed reaction is GTP + 3 H2O = 2-amino-5-formylamino-6-(5-phospho-D-ribosylamino)pyrimidin-4(3H)-one + 2 phosphate + 2 H(+). Its function is as follows. Catalyzes the formation of 2-amino-5-formylamino-6-ribofuranosylamino-4(3H)-pyrimidinone ribonucleotide monophosphate and inorganic phosphate from GTP. Also has an independent pyrophosphate phosphohydrolase activity. The chain is GTP cyclohydrolase III from Methanococcus maripaludis (strain C7 / ATCC BAA-1331).